The primary structure comprises 496 residues: Cytochrome P450 71B14 (496 aa).

The chain crosses the membrane as a helical span at residues 1 to 21; it reads MIWWFIVGASFFFAFILIAKD. Position 436 (Cys436) interacts with heme.

This sequence belongs to the cytochrome P450 family. It depends on heme as a cofactor.

It is found in the membrane. The polypeptide is Cytochrome P450 71B14 (CYP71B14) (Arabidopsis thaliana (Mouse-ear cress)).